The chain runs to 296 residues: Probable DNA-directed RNA polymerase III subunit RPC6 (296 aa).

The protein belongs to the eukaryotic RPC34/RPC39 RNA polymerase subunit family.

The protein localises to the nucleus. Its function is as follows. DNA-dependent RNA polymerase catalyzes the transcription of DNA into RNA using the four ribonucleoside triphosphates as substrates. Specific peripheric component of RNA polymerase III which synthesizes small RNAs, such as 5S rRNA and tRNAs. In Caenorhabditis elegans, this protein is Probable DNA-directed RNA polymerase III subunit RPC6.